The sequence spans 700 residues: mRNA cap guanine-N(7) methyltransferase (700 aa).

2 stretches are compositionally biased toward basic and acidic residues: residues 1–10 and 52–67; these read MVYDPIRDCD and EPPRAASVHEDAESHR. 2 disordered regions span residues 1-263 and 277-392; these read MVYD…SVLR and AHAN…ERNK. The segment covering 113 to 128 has biased composition (polar residues); the sequence is RSPSMSLSPRSQNQSL. Low complexity-rich tracts occupy residues 129 to 144 and 220 to 241; these read PYPSSRPGSAAGSAHP and PQPTTTPSSPSTSQHTPYTPHH. The mRNA cap 0 methyltransferase domain occupies 429–700; it reads SPIIGLKKFN…LYMGFAFEKM (272 aa). 438–439 serves as a coordination point for mRNA; the sequence is NN. Residues Lys442, Gly461, Asp483, Asp512, Gln538, and Tyr543 each coordinate S-adenosyl-L-methionine.

Belongs to the class I-like SAM-binding methyltransferase superfamily. mRNA cap 0 methyltransferase family.

Its subcellular location is the nucleus. It carries out the reaction a 5'-end (5'-triphosphoguanosine)-ribonucleoside in mRNA + S-adenosyl-L-methionine = a 5'-end (N(7)-methyl 5'-triphosphoguanosine)-ribonucleoside in mRNA + S-adenosyl-L-homocysteine. In terms of biological role, responsible for methylating the 5'-cap structure of mRNAs. In Cryptococcus neoformans var. neoformans serotype D (strain B-3501A) (Filobasidiella neoformans), this protein is mRNA cap guanine-N(7) methyltransferase (ABD1).